A 305-amino-acid polypeptide reads, in one-letter code: Ornithine carbamoyltransferase (305 aa).

Residues 54–57 (STRT), Gln-81, Arg-105, and 132–135 (HPCQ) each bind carbamoyl phosphate. L-ornithine contacts are provided by residues Asn-163, Asp-223, and 227 to 228 (SM). Residues 262-263 (CL) and Arg-290 each bind carbamoyl phosphate.

It belongs to the aspartate/ornithine carbamoyltransferase superfamily. OTCase family.

Its subcellular location is the cytoplasm. It carries out the reaction carbamoyl phosphate + L-ornithine = L-citrulline + phosphate + H(+). It functions in the pathway amino-acid biosynthesis; L-arginine biosynthesis; L-arginine from L-ornithine and carbamoyl phosphate: step 1/3. In terms of biological role, reversibly catalyzes the transfer of the carbamoyl group from carbamoyl phosphate (CP) to the N(epsilon) atom of ornithine (ORN) to produce L-citrulline. The chain is Ornithine carbamoyltransferase from Agrobacterium fabrum (strain C58 / ATCC 33970) (Agrobacterium tumefaciens (strain C58)).